A 205-amino-acid polypeptide reads, in one-letter code: Transcription antitermination protein NusB (205 aa).

The protein belongs to the NusB family.

Functionally, involved in transcription antitermination. Required for transcription of ribosomal RNA (rRNA) genes. Binds specifically to the boxA antiterminator sequence of the ribosomal RNA (rrn) operons. The polypeptide is Transcription antitermination protein NusB (Acaryochloris marina (strain MBIC 11017)).